The chain runs to 654 residues: Integrator complex subunit 9 (654 aa).

1D-myo-inositol hexakisphosphate contacts are provided by M1, R2, T18, F19, R504, K508, and R509.

The protein belongs to the metallo-beta-lactamase superfamily. RNA-metabolizing metallo-beta-lactamase-like family. INTS9 subfamily. In terms of assembly, belongs to the multiprotein complex Integrator, at least composed of IntS1, IntS2, IntS3, IntS4, omd/IntS5, IntS6, defl/IntS7, IntS8, IntS9, IntS10, IntS11, IntS12, asun/IntS13, IntS14 and IntS15. The core complex associates with protein phosphatase 2A subunits mts/PP2A and Pp2A-29B, to form the Integrator-PP2A (INTAC) complex. Within the complex, interacts with IntS1 and IntS12. IntS9 is part of the RNA endonuclease subcomplex, composed of IntS4, IntS9, IntS11 and inositol hexakisphosphate (InsP6).

The protein resides in the nucleus. It is found in the cytoplasm. The protein localises to the cytosol. In terms of biological role, component of the integrator complex, a multiprotein complex that terminates RNA polymerase II (Pol II) transcription in the promoter-proximal region of genes. The integrator complex provides a quality checkpoint during transcription elongation by driving premature transcription termination of transcripts that are unfavorably configured for transcriptional elongation: the complex terminates transcription by (1) catalyzing dephosphorylation of the C-terminal domain (CTD) of Pol II subunit Polr2A/Rbp1 and Spt5, and (2) degrading the exiting nascent RNA transcript via endonuclease activity. The integrator complex is also involved in the 3'-end processing of the U7 snRNA, and also the spliceosomal snRNAs U1, U2, U4 and U5. In Drosophila melanogaster (Fruit fly), this protein is Integrator complex subunit 9.